Consider the following 133-residue polypeptide: Large ribosomal subunit protein uL16c (133 aa).

The protein belongs to the universal ribosomal protein uL16 family. In terms of assembly, part of the 50S ribosomal subunit.

Its subcellular location is the plastid. It is found in the chloroplast. This Liriodendron tulipifera (Tuliptree) protein is Large ribosomal subunit protein uL16c.